Consider the following 60-residue polypeptide: Large ribosomal subunit protein uL30 (60 aa).

This sequence belongs to the universal ribosomal protein uL30 family. Part of the 50S ribosomal subunit.

The protein is Large ribosomal subunit protein uL30 of Bacillus mycoides (strain KBAB4) (Bacillus weihenstephanensis).